We begin with the raw amino-acid sequence, 119 residues long: Large ribosomal subunit protein bL20 (119 aa).

This sequence belongs to the bacterial ribosomal protein bL20 family.

Its function is as follows. Binds directly to 23S ribosomal RNA and is necessary for the in vitro assembly process of the 50S ribosomal subunit. It is not involved in the protein synthesizing functions of that subunit. The polypeptide is Large ribosomal subunit protein bL20 (Gluconacetobacter diazotrophicus (strain ATCC 49037 / DSM 5601 / CCUG 37298 / CIP 103539 / LMG 7603 / PAl5)).